A 48-amino-acid polypeptide reads, in one-letter code: Large ribosomal subunit protein bL34 (48 aa).

This sequence belongs to the bacterial ribosomal protein bL34 family.

The protein is Large ribosomal subunit protein bL34 of Gloeothece citriformis (strain PCC 7424) (Cyanothece sp. (strain PCC 7424)).